The following is a 133-amino-acid chain: Transmembrane protein 60 (133 aa).

The next 4 helical transmembrane spans lie at 5-25 (LAQRVLLTWLFTLLFLIMLVL), 35-55 (WFLIFIPVWIFDTILLVLLIV), 78-98 (AWYLIAMLLKLAFCLALCAKL), and 110-130 (FIPLWALLAGALTELGYNVFF).

The protein resides in the membrane. The polypeptide is Transmembrane protein 60 (TMEM60) (Homo sapiens (Human)).